Reading from the N-terminus, the 65-residue chain is Large ribosomal subunit protein bL35 (65 aa).

The protein belongs to the bacterial ribosomal protein bL35 family.

The polypeptide is Large ribosomal subunit protein bL35 (Paraburkholderia xenovorans (strain LB400)).